A 313-amino-acid chain; its full sequence is Hsp90 co-chaperone Cdc37-like 1 (313 aa).

The protein belongs to the CDC37 family. As to quaternary structure, forms complexes with Hsp70 and Hsp90.

The protein localises to the cytoplasm. Co-chaperone that binds to numerous proteins and promotes their interaction with Hsp70 and Hsp90. This Danio rerio (Zebrafish) protein is Hsp90 co-chaperone Cdc37-like 1 (cdc37l1).